The following is a 202-amino-acid chain: Adenosylcobalamin/alpha-ribazole phosphatase (202 aa).

H8 functions as the Tele-phosphohistidine intermediate in the catalytic mechanism. The Proton donor/acceptor role is filled by E81.

The protein belongs to the phosphoglycerate mutase family.

It catalyses the reaction adenosylcob(III)alamin 5'-phosphate + H2O = adenosylcob(III)alamin + phosphate. The enzyme catalyses alpha-ribazole 5'-phosphate + H2O = alpha-ribazole + phosphate. Its pathway is nucleoside biosynthesis; alpha-ribazole biosynthesis; alpha-ribazole from 5,6-dimethylbenzimidazole: step 2/2. In terms of biological role, catalyzes the conversion of adenosylcobalamin 5'-phosphate to adenosylcobalamin (vitamin B12); involved in the assembly of the nucleotide loop of cobalamin. Also catalyzes the hydrolysis of the phospho group from alpha-ribazole 5'-phosphate to form alpha-ribazole. The chain is Adenosylcobalamin/alpha-ribazole phosphatase (cobC) from Salmonella typhi.